The following is a 256-amino-acid chain: Probable fructose-2,6-bisphosphatase TIGAR A (256 aa).

The active-site Tele-phosphohistidine intermediate is the histidine 11. Glutamate 89 serves as the catalytic Proton donor/acceptor. Residues 147-170 (HQDKVQDGGTSSADESTEAPAGLA) form a disordered region.

Belongs to the phosphoglycerate mutase family.

Its subcellular location is the cytoplasm. It is found in the nucleus. The protein localises to the mitochondrion. The enzyme catalyses beta-D-fructose 2,6-bisphosphate + H2O = beta-D-fructose 6-phosphate + phosphate. Fructose-bisphosphatase hydrolyzing fructose-2,6-bisphosphate as well as fructose-1,6-bisphosphate. Acts as a negative regulator of glycolysis by lowering intracellular levels of fructose-2,6-bisphosphate in a p53/TP53-dependent manner, resulting in the pentose phosphate pathway (PPP) activation and NADPH production. Contributes to the generation of reduced glutathione to cause a decrease in intracellular reactive oxygen species (ROS) content, correlating with its ability to protect cells from oxidative or metabolic stress-induced cell death. May play a role in mitophagy inhibition. This is Probable fructose-2,6-bisphosphatase TIGAR A from Danio rerio (Zebrafish).